Reading from the N-terminus, the 961-residue chain is Retinoblastoma-related protein 1 (961 aa).

The interval 404 to 606 is domain A; the sequence is TPVSTAMTTA…EKGSSMYNSL (203 aa). The interval 404-819 is pocket; sequence TPVSTAMTTA…NEMFIPSVKP (416 aa). A spacer region spans residues 607–728; it reads AVAKPSLAAE…PGGGGETCAE (122 aa). A domain B region spans residues 729 to 819; the sequence is TAINVFFGKI…NEMFIPSVKP (91 aa). The disordered stretch occupies residues 829–856; that stretch reads NAEKNNHNDGQGPASPKPSPFPKLPDMS.

It belongs to the retinoblastoma protein (RB) family.

The protein resides in the nucleus. Regulator of biological processes that recruits a histone deacetylase to control gene transcription. May play a role in the entry into mitosis, negatively regulating the cell proliferation. Formation of stable complexes with geminiviridae replication-associated proteins may create a cellular environment which favors viral DNA replication. In Nicotiana tabacum (Common tobacco), this protein is Retinoblastoma-related protein 1 (RB1).